Here is a 980-residue protein sequence, read N- to C-terminus: Envelope glycoprotein B (980 aa).

The segment covering 1 to 14 (MSSGCRSVGGSTWG) has biased composition (polar residues). 2 disordered regions span residues 1-20 (MSSG…RGDG) and 88-118 (TTPS…TETP). Residues 1 to 86 (MSSGCRSVGG…LFGSCVVRAV (86 aa)) form the signal peptide. At 87 to 849 (PTTPSPPTST…SGIASFLNNP (763 aa)) the chain is on the virion surface side. Residues 96 to 118 (TPTSMSTHSHGTVDPTLLPTETP) are compositionally biased toward low complexity. Disulfide bonds link Cys140/Cys647, Cys157/Cys603, Cys231/Cys296, Cys389/Cys437, and Cys668/Cys708. Asn165 carries an N-linked (GlcNAc...) asparagine; by host glycan. Positions 197–203 (VWKGYSH) are involved in fusion and/or binding to host membrane. N-linked (GlcNAc...) asparagine; by host glycosylation occurs at Asn275. The segment at 282 to 290 (GWMPWRHYT) is involved in fusion and/or binding to host membrane. Residues Asn380, Asn423, Asn497, Asn514, Asn515, and Asn560 are each glycosylated (N-linked (GlcNAc...) asparagine; by host). Residues 505–516 (LLNPNANNNNNT) are compositionally biased toward low complexity. The segment at 505 to 535 (LLNPNANNNNNTTRRRRSLLSVPEPQPTQDG) is disordered. 2 N-linked (GlcNAc...) asparagine; by host glycosylation sites follow: Asn727 and Asn749. 2 hydrophobic membrane proximal region regions span residues 794 to 847 (IDSV…SFLN) and 823 to 843 (AVGT…SGIA). Residues 850 to 870 (FGGLAIGLLVIAGLVAAFFAY) form a helical membrane-spanning segment. Over 871 to 980 (RYVMQIRSNP…NDTMENEKMV (110 aa)) the chain is Intravirion. A Golgi targeting motif is present at residues 925–928 (YMSM). Residues 965 to 968 (YTRL) carry the Internalization motif motif.

It belongs to the herpesviridae glycoprotein B family. In terms of assembly, homotrimer; disulfide-linked. Binds to heparan sulfate proteoglycans. Interacts with gH/gL heterodimer. Post-translationally, a proteolytic cleavage by host furin generates two subunits that remain linked by disulfide bonds.

The protein resides in the virion membrane. It localises to the host cell membrane. It is found in the host endosome membrane. Its subcellular location is the host Golgi apparatus membrane. Its function is as follows. Envelope glycoprotein that forms spikes at the surface of virion envelope. Essential for the initial attachment to heparan sulfate moieties of the host cell surface proteoglycans. Involved in fusion of viral and cellular membranes leading to virus entry into the host cell. Following initial binding to its host receptors, membrane fusion is mediated by the fusion machinery composed at least of gB and the heterodimer gH/gL. May be involved in the fusion between the virion envelope and the outer nuclear membrane during virion egress. The sequence is that of Envelope glycoprotein B from Equus caballus (Horse).